A 331-amino-acid chain; its full sequence is Septin homolog spn2 (331 aa).

In terms of domain architecture, Septin-type G spans 29–301 (RGFQFNVMVV…EKFRFKQLSS (273 aa)). The tract at residues 39–46 (GPSGSGKS) is G1 motif. Residues 39–46 (GPSGSGKS), T73, G99, 179–187 (KSDSLTLEE), G235, and R250 contribute to the GTP site. The interval 96-99 (DTPG) is G3 motif. The segment at 178-181 (AKSD) is G4 motif. A disordered region spans residues 311–331 (RMGSPAPVYPSEPHLHTATAQ).

Belongs to the TRAFAC class TrmE-Era-EngA-EngB-Septin-like GTPase superfamily. Septin GTPase family. Component of the septin complex composed of two copies of each spn1, spn2, spn3 and spn4. Component of the sporulation-specific septin complex composed of at least spn2, spn5, spn6 and spn7.

The protein localises to the cytoplasm. It is found in the cell cortex. The protein resides in the forespore membrane. Its function is as follows. Plays a role in the cell cycle. Involved in a late stage of septum formation leading to the separation of the daughter cells. Involved in the correct orientation of forespore membrane extension during sporulation. Binds phosphatidylinositol 4-phosphate. This chain is Septin homolog spn2 (spn2), found in Schizosaccharomyces pombe (strain 972 / ATCC 24843) (Fission yeast).